A 147-amino-acid polypeptide reads, in one-letter code: Phospholipase A2 SSD1043 (147 aa).

Positions methionine 1–alanine 22 are cleaved as a signal peptide. Positions leucine 23 to arginine 28 are excised as a propeptide. 5 disulfides stabilise this stretch: cysteine 55/cysteine 71, cysteine 70/cysteine 130, cysteine 77/cysteine 123, cysteine 86/cysteine 116, and cysteine 109/cysteine 121. The Ca(2+) site is built by glycine 56 and glycine 58. Residue histidine 74 is part of the active site. Aspartate 75 lines the Ca(2+) pocket. Aspartate 124 is a catalytic residue.

It depends on Ca(2+) as a cofactor. Expressed by the venom gland.

Its subcellular location is the secreted. It catalyses the reaction a 1,2-diacyl-sn-glycero-3-phosphocholine + H2O = a 1-acyl-sn-glycero-3-phosphocholine + a fatty acid + H(+). In terms of biological role, PLA2 catalyzes the calcium-dependent hydrolysis of the 2-acyl groups in 3-sn-phosphoglycerides. This chain is Phospholipase A2 SSD1043, found in Scolopendra dehaani (Thai centipede).